Consider the following 257-residue polypeptide: Beta-fibrinogenase mucrofibrase-4 (257 aa).

The signal sequence occupies residues 1-18 (MVLIRVLANLLILQLSYA). The propeptide occupies 19-24 (QKSSEL). In terms of domain architecture, Peptidase S1 spans 25–248 (VIGGDECNIN…HLDWIKGFIA (224 aa)). Cystine bridges form between Cys-31-Cys-162, Cys-49-Cys-65, Cys-97-Cys-255, Cys-141-Cys-209, Cys-173-Cys-188, and Cys-199-Cys-224. Active-site charge relay system residues include His-64 and Asp-109. Catalysis depends on Ser-203, which acts as the Charge relay system.

This sequence belongs to the peptidase S1 family. Snake venom subfamily. In terms of assembly, monomer. As to expression, expressed by the venom gland.

The protein localises to the secreted. In terms of biological role, snake venom serine protease with fibrinogenolytic activities. Cleaves beta-chain of fibrinogen (FGB) efficiently and shows relatively lower activity on alpha-chain. In Protobothrops mucrosquamatus (Taiwan habu), this protein is Beta-fibrinogenase mucrofibrase-4.